We begin with the raw amino-acid sequence, 765 residues long: Periplasmic beta-glucosidase (765 aa).

Residues 1-20 form the signal peptide; it reads MKWLCSVGVAVSLAMQPALA. Residue D287 is part of the active site.

It belongs to the glycosyl hydrolase 3 family.

It is found in the periplasm. It carries out the reaction Hydrolysis of terminal, non-reducing beta-D-glucosyl residues with release of beta-D-glucose.. The protein is Periplasmic beta-glucosidase (bglX) of Salmonella typhimurium (strain LT2 / SGSC1412 / ATCC 700720).